A 201-amino-acid polypeptide reads, in one-letter code: MEKFTTLEGVAAPMRIINIDTDRIIPKQYLKTIKRTGLGQGLFSEMRYNDDGSENPDFVLNQPAYRNAKILVVGDNFGCGSSREHAPWALADFGIRCVISTSFADIFFNNCAKNGILAIVVPPEDLEKLFEDAERGANATLTIDLAAQTIKGPDGGTLHFDIDEGRKHNLLNGLDEIGLTLDQKAPAIEAYEAKLAQREWA.

The protein belongs to the LeuD family. LeuD type 1 subfamily. In terms of assembly, heterodimer of LeuC and LeuD.

It catalyses the reaction (2R,3S)-3-isopropylmalate = (2S)-2-isopropylmalate. It functions in the pathway amino-acid biosynthesis; L-leucine biosynthesis; L-leucine from 3-methyl-2-oxobutanoate: step 2/4. Catalyzes the isomerization between 2-isopropylmalate and 3-isopropylmalate, via the formation of 2-isopropylmaleate. This is 3-isopropylmalate dehydratase small subunit from Methylorubrum populi (strain ATCC BAA-705 / NCIMB 13946 / BJ001) (Methylobacterium populi).